The primary structure comprises 721 residues: Dolichyl-diphosphooligosaccharide--protein glycosyltransferase subunit STT3B (721 aa).

Residues 1–25 (MAAATALDSLPAPLRSLRLKTKQQE) are Cytoplasmic-facing. A helical transmembrane segment spans residues 26-46 (LLLRVSALALIYVLAFVVRLF). The Lumenal portion of the chain corresponds to 47–129 (SVLRYESMIH…VHIREVCVLT (83 aa)). The DXD motif 1 signature appears at 57–59 (EFD). Asp59 contacts Mn(2+). The chain crosses the membrane as a helical span at residues 130–148 (APFFAANTTLVAYAFGREI). Topologically, residues 149-150 (WD) are cytoplasmic. Residues 151–168 (SGAGLVAAALIAVCPGYI) traverse the membrane as a helical segment. The Lumenal segment spans residues 169–179 (SRSVAGSYDNE). The Mn(2+) site is built by Asp177 and Glu179. The DXD motif 2 motif lies at 177–179 (DNE). Residues 180 to 199 (GVAIFALLLTFYLFVRAVNT) traverse the membrane as a helical segment. The Cytoplasmic portion of the chain corresponds to 200–201 (GS). A helical membrane pass occupies residues 202–216 (LAWSLASAFGYFYMV). The Lumenal segment spans residues 217–221 (SAWGG). The chain crosses the membrane as a helical span at residues 222 to 238 (YVFIINLLPLYVLVLLV). Over 239 to 243 (TGRYS) the chain is Cytoplasmic. The helical transmembrane segment at 244–269 (QRLYVAYNSTYVLGMLLAMQIRFVGF) threads the bilayer. Over 270–277 (QHVQSGEH) the chain is Lumenal. Residues 278 to 297 (MAAMGVFFLLQVFFFLDWVK) form a helical membrane-spanning segment. Over 298–313 (YLLNDAKLFKSFLRIT) the chain is Cytoplasmic. A helical membrane pass occupies residues 314–334 (LTCVITVGTLALGIGTASGYI). Over 335–367 (SPWTGRFYSLLDPTYAKDHIPIIASVSEHQPTA) the chain is Lumenal. The SVSE motif signature appears at 359-362 (SVSE). Residues 368-390 (WSSFMFDFHILLFLFPAGLYFCF) traverse the membrane as a helical segment. Topologically, residues 391 to 396 (KRLSDA) are cytoplasmic. A helical transmembrane segment spans residues 397–413 (TIFIVMYGLTSMYFAGV). Over 414–417 (MVRL) the chain is Lumenal. Arg416 is a dolichyl diphosphooligosaccharide binding site. A helical membrane pass occupies residues 418–439 (ILVAAPAVCLISAIAASATIKN). At 440–471 (LTTLIRTKSKSPQTVSGKSSGSKAAAKGAVDQ) the chain is on the cytoplasmic side. A helical transmembrane segment spans residues 472–492 (SLPFQQNVAIALLLGAFYLLS). Over 493–721 (RYAVHCTWVT…YKVKPPKNRS (229 aa)) the chain is Lumenal. Residues 548–550 (WWD) form an interacts with target acceptor peptide in protein substrate region. Residues 548 to 552 (WWDYG) carry the WWDYG motif motif. Tyr553 lines the dolichyl diphosphooligosaccharide pocket. N-linked (GlcNAc...) asparagine glycans are attached at residues Asn560 and Asn567. The N-linked (GlcNAc...) (high mannose) asparagine glycan is linked to Asn571. Positions 615-622 (DINKFLWM) match the DK motif motif.

The protein belongs to the STT3 family. As to quaternary structure, component of the oligosaccharyltransferase (OST) complex. Mg(2+) is required as a cofactor. The cofactor is Mn(2+).

Its subcellular location is the endoplasmic reticulum membrane. The enzyme catalyses a di-trans,poly-cis-dolichyl diphosphooligosaccharide + L-asparaginyl-[protein] = N(4)-(oligosaccharide-(1-&gt;4)-N-acetyl-beta-D-glucosaminyl-(1-&gt;4)-N-acetyl-beta-D-glucosaminyl)-L-asparaginyl-[protein] + a di-trans,poly-cis-dolichyl diphosphate + H(+). It functions in the pathway protein modification; protein glycosylation. Its function is as follows. Catalytic subunit of the oligosaccharyl transferase (OST) complex that catalyzes the initial transfer of a defined glycan (Glc(3)Man(9)GlcNAc(2) in eukaryotes) from the lipid carrier dolichol-pyrophosphate to an asparagine residue within an Asn-X-Ser/Thr consensus motif in nascent polypeptide chains, the first step in protein N-glycosylation. N-glycosylation occurs cotranslationally and the complex associates with the Sec61 complex at the channel-forming translocon complex that mediates protein translocation across the endoplasmic reticulum (ER). All subunits are required for a maximal enzyme activity. This subunit contains the active site and the acceptor peptide and donor lipid-linked oligosaccharide (LLO) binding pockets. This is Dolichyl-diphosphooligosaccharide--protein glycosyltransferase subunit STT3B (STT3B) from Oryza sativa subsp. japonica (Rice).